Consider the following 129-residue polypeptide: Small ribosomal subunit protein bS6 (129 aa).

It belongs to the bacterial ribosomal protein bS6 family.

Its function is as follows. Binds together with bS18 to 16S ribosomal RNA. The chain is Small ribosomal subunit protein bS6 from Pelobacter propionicus (strain DSM 2379 / NBRC 103807 / OttBd1).